A 145-amino-acid chain; its full sequence is Large ribosomal subunit protein uL15 (145 aa).

The span at 1–11 shows a compositional bias: polar residues; sequence MELHSLKSTPG. Positions 1–48 are disordered; the sequence is MELHSLKSTPGSRKEKHRKGRGHAAGKGKQAGKGQSGQRKRSKVRLGF. A compositionally biased stretch (basic residues) spans 14 to 26; it reads KEKHRKGRGHAAG.

This sequence belongs to the universal ribosomal protein uL15 family. Part of the 50S ribosomal subunit.

Binds to the 23S rRNA. The chain is Large ribosomal subunit protein uL15 from Mycoplasmopsis pulmonis (strain UAB CTIP) (Mycoplasma pulmonis).